The chain runs to 227 residues: 2-heptyl-1-hydroxyquinolin-4(1H)-one methyltransferase (227 aa).

This sequence belongs to the methyltransferase superfamily. As to quaternary structure, monomer.

The protein resides in the cytoplasm. It carries out the reaction 2-heptyl-1-hydroxy-4(1H)-quinolinone + S-adenosyl-L-methionine = 2-heptyl-1-methoxy-4(1H)-quinolinone + S-adenosyl-L-homocysteine + H(+). The enzyme catalyses 3-bromo-2-heptyl-1-hydroxy-4(1H)-quinolinone + S-adenosyl-L-methionine = 3-bromo-2-heptyl-1-methoxy-4(1H)-quinolinone + S-adenosyl-L-homocysteine + H(+). Involved in cellular response to chemical stress and may contribute to resistance toward antimicrobial natural compounds as well as drugs. Catalyzes the methylation and detoxification of the P.aeruginosa toxin 2-heptyl-1-hydroxy-4(1H)-quinolinone (HQNO) to 2-heptyl-1-methoxy-4(1H)-quinolinone (HMOQ). Can also methylate 3-bromo-2-heptyl-1-hydroxy-4(1H)-quinolinone, and shows much lower activity with 1-hydroxyquinolin-4(1H)-one, quercetin, 4-hydroxyquinolin-2(1H)-one (DHQ) and 4-hydroxyisoquinolin-1(2H)-one. This Mycobacteroides abscessus (strain ATCC 19977 / DSM 44196 / CCUG 20993 / CIP 104536 / JCM 13569 / NCTC 13031 / TMC 1543 / L948) (Mycobacterium abscessus) protein is 2-heptyl-1-hydroxyquinolin-4(1H)-one methyltransferase.